Consider the following 146-residue polypeptide: Anti-sigma F factor (146 aa).

Belongs to the anti-sigma-factor family.

It carries out the reaction L-seryl-[protein] + ATP = O-phospho-L-seryl-[protein] + ADP + H(+). The catalysed reaction is L-threonyl-[protein] + ATP = O-phospho-L-threonyl-[protein] + ADP + H(+). In terms of biological role, binds to sigma F and blocks its ability to form an RNA polymerase holoenzyme (E-sigma F). Phosphorylates SpoIIAA on a serine residue. This phosphorylation may enable SpoIIAA to act as an anti-anti-sigma factor that counteracts SpoIIAB and thus releases sigma F from inhibition. This chain is Anti-sigma F factor, found in Shouchella clausii (strain KSM-K16) (Alkalihalobacillus clausii).